An 83-amino-acid chain; its full sequence is MENDAGEFVDLYCPRKCSASNRIIHAKDHASIQLSIAEVVPATGRMTENTKSYALCGAIRRMGESDDCIVRLTKKDGILTKNF.

The protein belongs to the eukaryotic ribosomal protein eS21 family. As to quaternary structure, component of the 40S small ribosomal subunit.

It localises to the cytoplasm. Its subcellular location is the cytosol. The protein localises to the rough endoplasmic reticulum. In Agriotes lineatus (Lined click beetle), this protein is Small ribosomal subunit protein eS21 (RpS21).